The chain runs to 213 residues: ATP-dependent Clp protease proteolytic subunit 3 (213 aa).

Residue Ser-107 is the Nucleophile of the active site. Residue His-132 is part of the active site.

This sequence belongs to the peptidase S14 family. In terms of assembly, fourteen ClpP subunits assemble into 2 heptameric rings which stack back to back to give a disk-like structure with a central cavity, resembling the structure of eukaryotic proteasomes.

It is found in the cytoplasm. It catalyses the reaction Hydrolysis of proteins to small peptides in the presence of ATP and magnesium. alpha-casein is the usual test substrate. In the absence of ATP, only oligopeptides shorter than five residues are hydrolyzed (such as succinyl-Leu-Tyr-|-NHMec, and Leu-Tyr-Leu-|-Tyr-Trp, in which cleavage of the -Tyr-|-Leu- and -Tyr-|-Trp bonds also occurs).. Functionally, cleaves peptides in various proteins in a process that requires ATP hydrolysis. Has a chymotrypsin-like activity. Plays a major role in the degradation of misfolded proteins. The chain is ATP-dependent Clp protease proteolytic subunit 3 from Frankia casuarinae (strain DSM 45818 / CECT 9043 / HFP020203 / CcI3).